The chain runs to 426 residues: Histidine--tRNA ligase (426 aa).

This sequence belongs to the class-II aminoacyl-tRNA synthetase family.

It is found in the cytoplasm. The catalysed reaction is tRNA(His) + L-histidine + ATP = L-histidyl-tRNA(His) + AMP + diphosphate + H(+). This is Histidine--tRNA ligase from Saccharolobus islandicus (strain L.S.2.15 / Lassen #1) (Sulfolobus islandicus).